The following is a 315-amino-acid chain: MGRHRRGRDIHGVLLLDKPQDISSNDALQKVKRIFNASKAGHTGALDPLATGMLPVCLGEATKFSQFLLDSDKRYRVIARLGQRTDTSDSHGQIISERAIQLSQVQLDAALDKFRGDTMQIPSMYSALKYQGKPLYEYARQGIEVEREARPITVYELQFIRWENDELELEIHCSKGTYIRTIIDDLGELLGCGAHVIYLRRLQVANYPNDRMVTLEQLYELQKQAKDQEIPVGELIDSLLLPMDSAIAHFPEVNLIPVVAAYFKQGQAVRSAKSPALVESMVRVTEGDERKFIGIAVINDDGLVAPRRLVVESRD.

Position 42 (H42) interacts with substrate. Residue D47 is the Nucleophile of the active site. 3 residues coordinate substrate: Y75, Y178, and L199.

This sequence belongs to the pseudouridine synthase TruB family. Type 1 subfamily.

It carries out the reaction uridine(55) in tRNA = pseudouridine(55) in tRNA. Its function is as follows. Responsible for synthesis of pseudouridine from uracil-55 in the psi GC loop of transfer RNAs. This is tRNA pseudouridine synthase B from Photorhabdus laumondii subsp. laumondii (strain DSM 15139 / CIP 105565 / TT01) (Photorhabdus luminescens subsp. laumondii).